A 116-amino-acid polypeptide reads, in one-letter code: Protein Rev (116 aa).

Phosphoserine; by host CK2 is present on residues S5 and S8. Positions 18–26 (CIKILYQSN) are homomultimerization. The disordered stretch occupies residues 27–47 (PYPKPEGTRQARRNRRRRWRA). The Nuclear localization signal and RNA-binding (RRE) signature appears at 34-50 (TRQARRNRRRRWRARQR). Basic residues predominate over residues 36–47 (QARRNRRRRWRA). The Nuclear export signal and binding to XPO1 motif lies at 73-84 (LQLPPLERLHIN). The segment at 87–116 (EDCGQGPEEGVGSSQISGESHAVLESGTKE) is disordered. Phosphoserine; by host is present on S99.

The protein belongs to the HIV-1 REV protein family. Homomultimer; when bound to the RRE. Multimeric assembly is essential for activity and may involve XPO1. Binds to human KPNB1, XPO1, TNPO1, RANBP5 and IPO7. Interacts with the viral Integrase. Interacts with human KHDRBS1. Interacts with human NAP1; this interaction decreases Rev multimerization and stimulates its activity. Interacts with human DEAD-box helicases DDX3 and DDX24; these interactions may serve for viral RNA export to the cytoplasm and packaging, respectively. Interacts with human PSIP1; this interaction may inhibit HIV-1 DNA integration by promoting dissociation of the Integrase-LEDGF/p75 complex. Asymmetrically arginine dimethylated at one site by host PRMT6. Methylation impairs the RNA-binding activity and export of viral RNA from the nucleus to the cytoplasm. Post-translationally, phosphorylated by protein kinase CK2. Presence of, and maybe binding to the N-terminus of the regulatory beta subunit of CK2 is necessary for CK2-mediated Rev's phosphorylation.

The protein localises to the host nucleus. The protein resides in the host nucleolus. It is found in the host cytoplasm. Its function is as follows. Escorts unspliced or incompletely spliced viral pre-mRNAs (late transcripts) out of the nucleus of infected cells. These pre-mRNAs carry a recognition sequence called Rev responsive element (RRE) located in the env gene, that is not present in fully spliced viral mRNAs (early transcripts). This function is essential since most viral proteins are translated from unspliced or partially spliced pre-mRNAs which cannot exit the nucleus by the pathway used by fully processed cellular mRNAs. Rev itself is translated from a fully spliced mRNA that readily exits the nucleus. Rev's nuclear localization signal (NLS) binds directly to KPNB1/Importin beta-1 without previous binding to KPNA1/Importin alpha-1. KPNB1 binds to the GDP bound form of RAN (Ran-GDP) and targets Rev to the nucleus. In the nucleus, the conversion from Ran-GDP to Ran-GTP dissociates Rev from KPNB1 and allows Rev's binding to the RRE in viral pre-mRNAs. Rev multimerization on the RRE via cooperative assembly exposes its nuclear export signal (NES) to the surface. Rev can then form a complex with XPO1/CRM1 and Ran-GTP, leading to nuclear export of the complex. Conversion from Ran-GTP to Ran-GDP mediates dissociation of the Rev/RRE/XPO1/RAN complex, so that Rev can return to the nucleus for a subsequent round of export. Beside KPNB1, also seems to interact with TNPO1/Transportin-1, RANBP5/IPO5 and IPO7/RANBP7 for nuclear import. The nucleoporin-like HRB/RIP is an essential cofactor that probably indirectly interacts with Rev to release HIV RNAs from the perinuclear region to the cytoplasm. The chain is Protein Rev from Human immunodeficiency virus type 1 group M subtype F1 (isolate VI850) (HIV-1).